Reading from the N-terminus, the 234-residue chain is Protein spitz (234 aa).

Positions 1–28 (MHSTMSVQHGLVALVLIGCLAHPWHVEA) are cleaved as a signal peptide. Residues 29–143 (CSSRTVPKPR…RPRPMLEKAS (115 aa)) lie on the Lumenal side of the membrane. The tract at residues 33–71 (TVPKPRSSISSSMSGTALPPTQAPVTSSTTMRTTTTTTP) is disordered. Low complexity predominate over residues 56-71 (PVTSSTTMRTTTTTTP). N-linked (GlcNAc...) asparagine glycosylation occurs at Asn74. The 45-residue stretch at 78–122 (PTYKCPETFDAWYCLNDAHCFAVKIADLPVYSCECAIGFMGQRCE) folds into the EGF-like domain. Disulfide bonds link Cys82–Cys97, Cys91–Cys110, and Cys112–Cys121. Residues 144–164 (IASGAMCALVFMLFVCLAFYL) form a helical membrane-spanning segment. The Cytoplasmic segment spans residues 165-234 (RFEQRAAKKA…SFAIRRSNKL (70 aa)).

In terms of assembly, interacts with Star via the lumenal domain. In terms of processing, proteolytic processing by Rhomboid occurs in the Golgi. Cleavage takes place within the transmembrane domain close to residue 144 and the active growth factor is released. N-glycosylated and O-glycosylated. As to expression, expressed throughout the embryo.

It is found in the cell membrane. The protein localises to the endoplasmic reticulum membrane. Its subcellular location is the golgi apparatus membrane. In terms of biological role, ligand for the EGF receptor (Gurken). Involved in a number of unrelated developmental choices, for example, dorsal-ventral axis formation, glial migration, sensory organ determination, and muscle development. It is required for photoreceptor determination. This Drosophila melanogaster (Fruit fly) protein is Protein spitz (spi).